A 218-amino-acid chain; its full sequence is Peptide methionine sulfoxide reductase MsrA (218 aa).

Residue Cys57 is part of the active site.

It belongs to the MsrA Met sulfoxide reductase family.

It carries out the reaction L-methionyl-[protein] + [thioredoxin]-disulfide + H2O = L-methionyl-(S)-S-oxide-[protein] + [thioredoxin]-dithiol. The enzyme catalyses [thioredoxin]-disulfide + L-methionine + H2O = L-methionine (S)-S-oxide + [thioredoxin]-dithiol. Its function is as follows. Has an important function as a repair enzyme for proteins that have been inactivated by oxidation. Catalyzes the reversible oxidation-reduction of methionine sulfoxide in proteins to methionine. This Brucella abortus (strain S19) protein is Peptide methionine sulfoxide reductase MsrA.